We begin with the raw amino-acid sequence, 264 residues long: Small ribosomal subunit protein uS2 (264 aa).

A disordered region spans residues 228–264 (QLDAEDDYEDYDGSEYDDDYEETEYTDAVIPDEETEE). The segment covering 230 to 264 (DAEDDYEDYDGSEYDDDYEETEYTDAVIPDEETEE) has biased composition (acidic residues).

It belongs to the universal ribosomal protein uS2 family.

The protein is Small ribosomal subunit protein uS2 of Nostoc punctiforme (strain ATCC 29133 / PCC 73102).